Consider the following 271-residue polypeptide: Zinc finger protein 501 (271 aa).

C2H2-type zinc fingers lie at residues 22-44 (SKCSECGRFFTQRSSLTQHQRIH), 50-72 (YVCSECGSCFRKQSNLTQHLRIH), 78-100 (YKCNECEKAFQTKAILVQHLRIH), 106-128 (YKCNECGKAFCQSPSLIKHQRIH), 134-156 (YKCAECGKAFSQSVCLTRHQRSH), 162-184 (FKCNECGKAFNQSACLMQHQRIH), 190-212 (YTCTECGKAFTQNSSLVEHERTH), 218-240 (YKCSECEKTFRKQAHLSEHYRIH), and 246-268 (YECFGCGKSFRHSSALLRHQRLH).

Belongs to the krueppel C2H2-type zinc-finger protein family.

The protein localises to the nucleus. Its subcellular location is the nucleolus. Functionally, may be involved in transcriptional regulation. Essential for Golgi structural integrity. This Pongo abelii (Sumatran orangutan) protein is Zinc finger protein 501 (ZNF501).